Here is a 747-residue protein sequence, read N- to C-terminus: Sushi domain-containing protein 1 (747 aa).

The first 29 residues, 1 to 29, serve as a signal peptide directing secretion; sequence MGRGPWDAGPSRRLLPLLLLLGLARGAAG. The Extracellular segment spans residues 30-721; the sequence is APGPDGLDVC…WAQVKDSSLM (692 aa). Positions 35 to 72 constitute an EGF-like 1 domain; sequence GLDVCATCHEHATCQQREGKKICICNYGFVGNGRTQCV. Cystine bridges form between Cys39/Cys48, Cys42/Cys57, Cys59/Cys71, Cys77/Cys91, and Cys85/Cys100. Residues 73–112 form the EGF-like 2; calcium-binding domain; it reads DKNECQFGATLVCGNHTSCHNTPGGFYCICLEGYRATNNN. Residues Asn87 and Asn112 are each glycosylated (N-linked (GlcNAc...) asparagine). The 38-residue stretch at 125-162 folds into the EGF-like 3; calcium-binding domain; that stretch reads DIDECEVSGLCRHGGRCVNTHGSFECYCMDGYLPRNGP. Cystine bridges form between Cys129/Cys141, Cys135/Cys150, Cys179/Cys221, Cys206/Cys234, Cys239/Cys281, and Cys266/Cys294. 2 Sushi domains span residues 177-236 and 237-296; these read IDCG…HCQE and INCG…TCTE. N-linked (GlcNAc...) asparagine glycosylation occurs at Asn193. Residue Asn253 is glycosylated (N-linked (GlcNAc...) asparagine). Asn348, Asn367, and Asn563 each carry an N-linked (GlcNAc...) asparagine glycan. The chain crosses the membrane as a helical span at residues 722–742; the sequence is LLQMAGVGLGSLAVVIILTFL. At 743–747 the chain is on the cytoplasmic side; it reads SFSAV.

The protein localises to the membrane. This is Sushi domain-containing protein 1 (SUSD1) from Homo sapiens (Human).